Here is a 544-residue protein sequence, read N- to C-terminus: CTP synthase (544 aa).

An amidoligase domain region spans residues Met1–Leu266. Ser12 serves as a coordination point for CTP. A UTP-binding site is contributed by Ser12. Ser13–Val18 provides a ligand contact to ATP. Tyr53 contributes to the L-glutamine binding site. Asp70 contributes to the ATP binding site. Residues Asp70 and Glu140 each coordinate Mg(2+). CTP is bound by residues Asp147–Glu149, Lys187–Gln192, and Lys223. Residues Lys187–Gln192 and Lys223 contribute to the UTP site. The region spanning Thr291–Gln544 is the Glutamine amidotransferase type-1 domain. Residue Gly356 coordinates L-glutamine. Residue Cys383 is the Nucleophile; for glutamine hydrolysis of the active site. L-glutamine-binding positions include Leu384–Gln387, Glu407, and Arg467. Active-site residues include His517 and Glu519.

Belongs to the CTP synthase family. In terms of assembly, homotetramer.

It carries out the reaction UTP + L-glutamine + ATP + H2O = CTP + L-glutamate + ADP + phosphate + 2 H(+). The enzyme catalyses L-glutamine + H2O = L-glutamate + NH4(+). It catalyses the reaction UTP + NH4(+) + ATP = CTP + ADP + phosphate + 2 H(+). Its pathway is pyrimidine metabolism; CTP biosynthesis via de novo pathway; CTP from UDP: step 2/2. Allosterically activated by GTP, when glutamine is the substrate; GTP has no effect on the reaction when ammonia is the substrate. The allosteric effector GTP functions by stabilizing the protein conformation that binds the tetrahedral intermediate(s) formed during glutamine hydrolysis. Inhibited by the product CTP, via allosteric rather than competitive inhibition. Its function is as follows. Catalyzes the ATP-dependent amination of UTP to CTP with either L-glutamine or ammonia as the source of nitrogen. Regulates intracellular CTP levels through interactions with the four ribonucleotide triphosphates. This Deinococcus radiodurans (strain ATCC 13939 / DSM 20539 / JCM 16871 / CCUG 27074 / LMG 4051 / NBRC 15346 / NCIMB 9279 / VKM B-1422 / R1) protein is CTP synthase.